The sequence spans 607 residues: Albumin B (607 aa).

Residues 1–18 (MKWITLICLLISSSFIES) form the signal peptide. A propeptide spanning residues 19–24 (RILFKR) is cleaved from the precursor. Albumin domains follow at residues 22 to 209 (FKRD…KQLM), 210 to 402 (KQSH…RFMN), and 403 to 600 (EAKE…VLIE). Residue histidine 30 participates in Cu cation binding. 17 cysteine pairs are disulfide-bonded: cysteine 80–cysteine 88, cysteine 101–cysteine 117, cysteine 116–cysteine 127, cysteine 147–cysteine 192, cysteine 191–cysteine 200, cysteine 223–cysteine 269, cysteine 268–cysteine 276, cysteine 288–cysteine 302, cysteine 301–cysteine 312, cysteine 339–cysteine 384, cysteine 383–cysteine 392, cysteine 415–cysteine 461, cysteine 460–cysteine 471, cysteine 484–cysteine 500, cysteine 499–cysteine 510, cysteine 537–cysteine 582, and cysteine 581–cysteine 590.

The protein belongs to the ALB/AFP/VDB family. In terms of tissue distribution, plasma.

It is found in the secreted. Its function is as follows. Serum albumin, the main protein of plasma, has a good binding capacity for water, Ca(2+), Na(+), K(+), fatty acids, hormones, bilirubin and drugs. Its main function is the regulation of the colloidal osmotic pressure of blood. This chain is Albumin B (alb-b), found in Xenopus laevis (African clawed frog).